The sequence spans 84 residues: RQC P-site tRNA stabilizing factor (84 aa).

Residues 1–64 form the S4 RNA-binding domain; the sequence is MRIDKFLQSV…IEEYTILQIP (64 aa).

Belongs to the RqcP family. In terms of assembly, associates with stalled 50S ribosomal subunits. Binds to RqcH, 23S rRNA and the P-site tRNA. Does not require RqcH for association with 50S subunits.

In terms of biological role, key component of the ribosome quality control system (RQC), a ribosome-associated complex that mediates the extraction of incompletely synthesized nascent chains from stalled ribosomes and their subsequent degradation. RqcH recruits Ala-charged tRNA, and with RqcP directs the elongation of stalled nascent chains on 50S ribosomal subunits, leading to non-templated C-terminal alanine extensions (Ala tail). The Ala tail promotes nascent chain degradation. RqcP is associated with the translocation-like movement of the peptidyl-tRNA from the A-site into the P-site. The sequence is that of RQC P-site tRNA stabilizing factor from Helicobacter pylori (strain ATCC 700392 / 26695) (Campylobacter pylori).